Consider the following 189-residue polypeptide: Elongation factor P (189 aa).

The protein belongs to the elongation factor P family.

The protein localises to the cytoplasm. It functions in the pathway protein biosynthesis; polypeptide chain elongation. Involved in peptide bond synthesis. Stimulates efficient translation and peptide-bond synthesis on native or reconstituted 70S ribosomes in vitro. Probably functions indirectly by altering the affinity of the ribosome for aminoacyl-tRNA, thus increasing their reactivity as acceptors for peptidyl transferase. This is Elongation factor P from Rhizobium radiobacter (Agrobacterium tumefaciens).